Here is a 254-residue protein sequence, read N- to C-terminus: Pyrroloquinoline-quinone synthase (254 aa).

This sequence belongs to the PqqC family.

The catalysed reaction is 6-(2-amino-2-carboxyethyl)-7,8-dioxo-1,2,3,4,7,8-hexahydroquinoline-2,4-dicarboxylate + 3 O2 = pyrroloquinoline quinone + 2 H2O2 + 2 H2O + H(+). Its pathway is cofactor biosynthesis; pyrroloquinoline quinone biosynthesis. Ring cyclization and eight-electron oxidation of 3a-(2-amino-2-carboxyethyl)-4,5-dioxo-4,5,6,7,8,9-hexahydroquinoline-7,9-dicarboxylic-acid to PQQ. The polypeptide is Pyrroloquinoline-quinone synthase (Rhodopseudomonas palustris (strain TIE-1)).